The primary structure comprises 548 residues: CTL-like protein DDB_G0288717 (548 aa).

Residues 1–44 form a disordered region; the sequence is MWAPEEDYKQPLLTNSRVANNGNNNNSNGRGGSSSPSTRLQPEH. N-linked (GlcNAc...) asparagine glycosylation is present at asparagine 25. Residues 52–72 form a helical membrane-spanning segment; sequence ILFTILFLLVIGGMAAISGIA. N-linked (GlcNAc...) asparagine glycosylation occurs at asparagine 97. A run of 4 helical transmembrane segments spans residues 125–145, 151–171, 184–204, and 226–246; these read DILI…IQLL, FFIY…GGLF, MIVG…IVYL, and PSVF…IAYW. Asparagine 273 carries N-linked (GlcNAc...) asparagine glycosylation. The next 2 helical transmembrane spans lie at 290–310 and 350–370; these read NLMY…SAVF and FGSL…AFML. N-linked (GlcNAc...) asparagine glycosylation is present at asparagine 377. The next 3 membrane-spanning stretches (helical) occupy residues 381-401, 442-462, and 479-499; these read KLVV…ESIV, FIGG…SALF, and IALS…IVGI. A glycan (N-linked (GlcNAc...) asparagine) is linked at asparagine 544.

Belongs to the CTL (choline transporter-like) family.

The protein resides in the membrane. In Dictyostelium discoideum (Social amoeba), this protein is CTL-like protein DDB_G0288717.